Here is a 320-residue protein sequence, read N- to C-terminus: Melanocyte-stimulating hormone receptor (320 aa).

Over 1 to 40 (MPVLGPERRLLASLSSAPPAAPRLGLAANQTNQTGPQCLE) the chain is Extracellular. The N-linked (GlcNAc...) asparagine glycan is linked to Asn-32. The helical transmembrane segment at 41 to 66 (VSIPDGLFLSLGLVSLVENVLVVAAI) threads the bilayer. The Cytoplasmic segment spans residues 67-75 (AKNRNLHSP). The chain crosses the membrane as a helical span at residues 76–96 (MYYFVCCLAVSDLLVSVSNVL). Residues 97-121 (ETAVLLLLEAGALAAQAAVVQQLDN) lie on the Extracellular side of the membrane. Residues 122–143 (VMDVLICGSMVSSLCFLGAIAV) traverse the membrane as a helical segment. Over 144–166 (DRYVSIFYALRYHSIVTLPRAGR) the chain is Cytoplasmic. A helical membrane pass occupies residues 167–186 (AIAAIWAGSVLSSTLFIAYY). Over 187 to 194 (HHTAVLLG) the chain is Extracellular. The helical transmembrane segment at 195 to 214 (LVSFFVAMLALMAVLYVHML) threads the bilayer. Residues 215 to 243 (ARACQHGRHIARLHKTQHPTRQGCGLKGA) lie on the Cytoplasmic side of the membrane. The helical transmembrane segment at 244–269 (ATLTILLGVFLLCWAPFFLHLSLVVL) threads the bilayer. Residues 270 to 282 (CPQHPTCGCVFKN) lie on the Extracellular side of the membrane. Residues 283–303 (VNLFLALVICNSIVDPLIYAF) traverse the membrane as a helical segment. Residues 304-320 (RSQELRKTLQEVLQCSW) lie on the Cytoplasmic side of the membrane.

The protein belongs to the G-protein coupled receptor 1 family. Interacts with MGRN1, but does not undergo MGRN1-mediated ubiquitination; this interaction competes with GNAS-binding and thus inhibits agonist-induced cAMP production. Interacts with OPN3; the interaction results in a decrease in MC1R-mediated cAMP signaling and ultimately a decrease in melanin production in melanocytes.

The protein resides in the cell membrane. Receptor for MSH (alpha, beta and gamma) and ACTH. The activity of this receptor is mediated by G proteins which activate adenylate cyclase. Mediates melanogenesis, the production of eumelanin (black/brown) and phaeomelanin (red/yellow), via regulation of cAMP signaling in melanocytes. This is Melanocyte-stimulating hormone receptor (MC1R) from Sus scrofa (Pig).